A 429-amino-acid polypeptide reads, in one-letter code: GTPase Obg (429 aa).

Residues 1–158 (MFVDQVKIYV…RNVQLELKVL (158 aa)) form the Obg domain. Residues 124–145 (RGNKRFATPANPAPELSENGEP) form a disordered region. Residues 159 to 329 (ADVGLVGFPS…LLLAIADKLE (171 aa)) form the OBG-type G domain. Residues 165–172 (GFPSVGKS), 190–194 (FTTIV), 212–215 (DLPG), 282–285 (NKMD), and 310–312 (SAV) each bind GTP. Mg(2+) is bound by residues Ser-172 and Thr-192. In terms of domain architecture, OCT spans 351 to 429 (KYVADEPDFE…LLDYEFEFMD (79 aa)).

This sequence belongs to the TRAFAC class OBG-HflX-like GTPase superfamily. OBG GTPase family. In terms of assembly, monomer. It depends on Mg(2+) as a cofactor.

It localises to the cytoplasm. In terms of biological role, an essential GTPase which binds GTP, GDP and possibly (p)ppGpp with moderate affinity, with high nucleotide exchange rates and a fairly low GTP hydrolysis rate. Plays a role in control of the cell cycle, stress response, ribosome biogenesis and in those bacteria that undergo differentiation, in morphogenesis control. This is GTPase Obg from Listeria monocytogenes serotype 4a (strain HCC23).